Here is a 173-residue protein sequence, read N- to C-terminus: Small ribosomal subunit protein uS9 (173 aa).

Residues 1 to 15 (MTDTPTENLENTEVT) show a composition bias toward polar residues. Disordered stretches follow at residues 1-26 (MTDTPTENLENTEVTPFTEGDREIAY) and 135-173 (EASRPALKKAGMLTRDARVKERKKAGLKKARKAPQYSKR). Over residues 154-173 (KERKKAGLKKARKAPQYSKR) the composition is skewed to basic residues.

It belongs to the universal ribosomal protein uS9 family.

The protein is Small ribosomal subunit protein uS9 of Cutibacterium acnes (strain DSM 16379 / KPA171202) (Propionibacterium acnes).